Reading from the N-terminus, the 314-residue chain is D-alanine--D-alanine ligase (314 aa).

An ATP-grasp domain is found at K114 to D309. I140 to T195 serves as a coordination point for ATP. Mg(2+) contacts are provided by D263, E276, and N278.

The protein belongs to the D-alanine--D-alanine ligase family. It depends on Mg(2+) as a cofactor. Mn(2+) is required as a cofactor.

Its subcellular location is the cytoplasm. It catalyses the reaction 2 D-alanine + ATP = D-alanyl-D-alanine + ADP + phosphate + H(+). The protein operates within cell wall biogenesis; peptidoglycan biosynthesis. Cell wall formation. The sequence is that of D-alanine--D-alanine ligase from Chromohalobacter salexigens (strain ATCC BAA-138 / DSM 3043 / CIP 106854 / NCIMB 13768 / 1H11).